Reading from the N-terminus, the 184-residue chain is Orotate phosphoribosyltransferase (184 aa).

5-phospho-alpha-D-ribose 1-diphosphate is bound by residues R99, K100, K103, H105, and 125-133 (EDTTTTGNS). Orotate-binding residues include T129 and R157.

This sequence belongs to the purine/pyrimidine phosphoribosyltransferase family. PyrE subfamily. As to quaternary structure, homodimer. Mg(2+) serves as cofactor.

The catalysed reaction is orotidine 5'-phosphate + diphosphate = orotate + 5-phospho-alpha-D-ribose 1-diphosphate. It participates in pyrimidine metabolism; UMP biosynthesis via de novo pathway; UMP from orotate: step 1/2. Functionally, catalyzes the transfer of a ribosyl phosphate group from 5-phosphoribose 1-diphosphate to orotate, leading to the formation of orotidine monophosphate (OMP). The sequence is that of Orotate phosphoribosyltransferase from Corynebacterium glutamicum (strain ATCC 13032 / DSM 20300 / JCM 1318 / BCRC 11384 / CCUG 27702 / LMG 3730 / NBRC 12168 / NCIMB 10025 / NRRL B-2784 / 534).